We begin with the raw amino-acid sequence, 214 residues long: Cytochrome b (214 aa).

The next 4 membrane-spanning stretches (helical) occupy residues 31-51 (FGSM…FLAI), 75-96 (WIMQ…YIHI), 111-131 (WLSG…GYVL), and 176-196 (FFAL…IHIL). Residues H81 and H95 each contribute to the heme b site. Heme b contacts are provided by H180 and H194. An a ubiquinone-binding site is contributed by H199.

Belongs to the cytochrome b family. As to quaternary structure, the cytochrome bc1 complex contains 3 respiratory subunits (MT-CYB, CYC1 and UQCRFS1), 2 core proteins (UQCRC1 and UQCRC2) and probably 6 low-molecular weight proteins. Requires heme b as cofactor.

Its subcellular location is the mitochondrion inner membrane. Functionally, component of the ubiquinol-cytochrome c reductase complex (complex III or cytochrome b-c1 complex) that is part of the mitochondrial respiratory chain. The b-c1 complex mediates electron transfer from ubiquinol to cytochrome c. Contributes to the generation of a proton gradient across the mitochondrial membrane that is then used for ATP synthesis. The polypeptide is Cytochrome b (MT-CYB) (Bothrops bilineatus (Green jararaca)).